Reading from the N-terminus, the 441-residue chain is MREIVHIQAGQCGNQIGSKFWEVISDEHGIDPSGQYVGDSDLQLERINVYYNEAGSNKYVPRAVLVDLEPGTMDSVRSGPFGQLFRPDNYVFGQSGAGNNWAKGHYTEGAELVDNVLDVVRKEAESTDCLQGFQLTHSLGGGTGSGMGTLLISKIREEYPDRIMNTFSVVPSPKVSDTVVEPYNATLSVHQLVENTDSTFCIDNEALYDICFRTLKLTTPTYGDLNHLVSATMSGVTTCLRFPGQLNADLRKLAVNMVPFPRLHFFMPGFAPLTSRSNQQYRAITVPELTQQCFDAKNMMAACDPRHGRYLTAAAIFRGRMSMKEVDEQMLNIQNKNSSYFVDWIPNNVKTAVCDIPPRGLKMSATFIGNSTAIQELFKRISEQFTAMFRRKAFLHWYTGEGMDEMEFTEAESNMNDLVSEYQQYQEAAADEDAAEAFDGE.

8 residues coordinate GTP: Gln11, Glu69, Ser138, Gly142, Thr143, Gly144, Asn204, and Asn226. Position 69 (Glu69) interacts with Mg(2+).

This sequence belongs to the tubulin family. As to quaternary structure, dimer of alpha and beta chains. A typical microtubule is a hollow water-filled tube with an outer diameter of 25 nm and an inner diameter of 15 nM. Alpha-beta heterodimers associate head-to-tail to form protofilaments running lengthwise along the microtubule wall with the beta-tubulin subunit facing the microtubule plus end conferring a structural polarity. Microtubules usually have 13 protofilaments but different protofilament numbers can be found in some organisms and specialized cells. Mg(2+) serves as cofactor. As to expression, expressed primarily in touch receptor neurons.

Its subcellular location is the cytoplasm. It localises to the cytoskeleton. Functionally, TTubulin is the major constituent of microtubules, a cylinder consisting of laterally associated linear protofilaments composed of alpha- and beta-tubulin heterodimers. Microtubules grow by the addition of GTP-tubulin dimers to the microtubule end, where a stabilizing cap forms. Below the cap, tubulin dimers are in GDP-bound state, owing to GTPase activity of alpha-tubulin. Plays a role in mechanosensory transduction (touch sensitivity). Its function is as follows. Mec-7 beta-tubulin is required for the production of 15-protofilament microtubules. The sequence is that of Tubulin beta-1 chain (mec-7) from Caenorhabditis elegans.